Reading from the N-terminus, the 227-residue chain is Cytochrome c oxidase subunit 2 (227 aa).

At 1–14 (MAYPLQLGLQDASS) the chain is on the mitochondrial intermembrane side. A helical membrane pass occupies residues 15–45 (PIMEELMNFHDHTLMIVFLISSLVLYLISLM). Over 46–59 (LTTKLIHTSTMDAQ) the chain is Mitochondrial matrix. Residues 60-87 (EVETVWTILPAIILILIALPSLRILYMM) traverse the membrane as a helical segment. Residues 88-227 (DEINNPVLTV…LFENWSLSLT (140 aa)) lie on the Mitochondrial intermembrane side of the membrane. Cu cation is bound by residues histidine 161, cysteine 196, glutamate 198, cysteine 200, histidine 204, and methionine 207. A Mg(2+)-binding site is contributed by glutamate 198.

This sequence belongs to the cytochrome c oxidase subunit 2 family. Component of the cytochrome c oxidase (complex IV, CIV), a multisubunit enzyme composed of 14 subunits. The complex is composed of a catalytic core of 3 subunits MT-CO1, MT-CO2 and MT-CO3, encoded in the mitochondrial DNA, and 11 supernumerary subunits COX4I, COX5A, COX5B, COX6A, COX6B, COX6C, COX7A, COX7B, COX7C, COX8 and NDUFA4, which are encoded in the nuclear genome. The complex exists as a monomer or a dimer and forms supercomplexes (SCs) in the inner mitochondrial membrane with NADH-ubiquinone oxidoreductase (complex I, CI) and ubiquinol-cytochrome c oxidoreductase (cytochrome b-c1 complex, complex III, CIII), resulting in different assemblies (supercomplex SCI(1)III(2)IV(1) and megacomplex MCI(2)III(2)IV(2)). Found in a complex with TMEM177, COA6, COX18, COX20, SCO1 and SCO2. Interacts with TMEM177 in a COX20-dependent manner. Interacts with COX20. Interacts with COX16. The cofactor is Cu cation.

Its subcellular location is the mitochondrion inner membrane. It catalyses the reaction 4 Fe(II)-[cytochrome c] + O2 + 8 H(+)(in) = 4 Fe(III)-[cytochrome c] + 2 H2O + 4 H(+)(out). Its function is as follows. Component of the cytochrome c oxidase, the last enzyme in the mitochondrial electron transport chain which drives oxidative phosphorylation. The respiratory chain contains 3 multisubunit complexes succinate dehydrogenase (complex II, CII), ubiquinol-cytochrome c oxidoreductase (cytochrome b-c1 complex, complex III, CIII) and cytochrome c oxidase (complex IV, CIV), that cooperate to transfer electrons derived from NADH and succinate to molecular oxygen, creating an electrochemical gradient over the inner membrane that drives transmembrane transport and the ATP synthase. Cytochrome c oxidase is the component of the respiratory chain that catalyzes the reduction of oxygen to water. Electrons originating from reduced cytochrome c in the intermembrane space (IMS) are transferred via the dinuclear copper A center (CU(A)) of subunit 2 and heme A of subunit 1 to the active site in subunit 1, a binuclear center (BNC) formed by heme A3 and copper B (CU(B)). The BNC reduces molecular oxygen to 2 water molecules using 4 electrons from cytochrome c in the IMS and 4 protons from the mitochondrial matrix. The protein is Cytochrome c oxidase subunit 2 (MT-CO2) of Taterillus emini (Emin's gerbil).